The following is a 385-amino-acid chain: Homoserine O-succinyltransferase (385 aa).

One can recognise an AB hydrolase-1 domain in the interval 45 to 355 (NAVLVCHALN…SHGHDAFLLD (311 aa)). Ser151 (nucleophile) is an active-site residue. Arg221 contacts substrate. Catalysis depends on residues Asp316 and His349. Asp350 contacts substrate.

Belongs to the AB hydrolase superfamily. MetX family. In terms of assembly, homodimer.

The protein localises to the cytoplasm. The catalysed reaction is L-homoserine + succinyl-CoA = O-succinyl-L-homoserine + CoA. It participates in amino-acid biosynthesis; L-methionine biosynthesis via de novo pathway; O-succinyl-L-homoserine from L-homoserine: step 1/1. Transfers a succinyl group from succinyl-CoA to L-homoserine, forming succinyl-L-homoserine. This Herminiimonas arsenicoxydans protein is Homoserine O-succinyltransferase.